Here is a 266-residue protein sequence, read N- to C-terminus: Hydroxyethylthiazole kinase (266 aa).

Met43 is a binding site for substrate. Positions 119 and 166 each coordinate ATP. Gly193 contributes to the substrate binding site.

The protein belongs to the Thz kinase family. Requires Mg(2+) as cofactor.

It catalyses the reaction 5-(2-hydroxyethyl)-4-methylthiazole + ATP = 4-methyl-5-(2-phosphooxyethyl)-thiazole + ADP + H(+). It functions in the pathway cofactor biosynthesis; thiamine diphosphate biosynthesis; 4-methyl-5-(2-phosphoethyl)-thiazole from 5-(2-hydroxyethyl)-4-methylthiazole: step 1/1. Functionally, catalyzes the phosphorylation of the hydroxyl group of 4-methyl-5-beta-hydroxyethylthiazole (THZ). This is Hydroxyethylthiazole kinase from Methanococcus maripaludis (strain C7 / ATCC BAA-1331).